We begin with the raw amino-acid sequence, 256 residues long: MEGEDLGSWLGLGIGGGGYAYGGDDCRRSPSSPSPVQMLFSQHVKEEITRGYDHGRDEEQASGSKIMKGERGARLRVMRSIRNSGGDGSRSRVLSLGDDGGDGGSGSGGGGGTRKKLQLTKEQSTLLEDSFRVHNILSHAQKHELARQLKLKPRQVEVWFQNRRARTKLKQTEVDCEFLKRCCESLTEENKQLKHELMELRRLASAAAAAAGSQLYVQFPRAAAAAMVNVCPSCEKVTVMGGGGGETGKSSSSYSS.

The tract at residues Tyr-52–Leu-117 is disordered. Over residues Asp-102 to Gly-112 the composition is skewed to gly residues. The segment at residues Gly-112–Gln-171 is a DNA-binding region (homeobox). Residues Lys-170 to Gln-214 are leucine-zipper.

Belongs to the HD-ZIP homeobox family. Class II subfamily. As to expression, expressed in roots, leaf sheaths and blades and panicles.

The protein localises to the nucleus. In terms of biological role, probable transcription factor. The chain is Homeobox-leucine zipper protein HOX18 (HOX18) from Oryza sativa subsp. indica (Rice).